A 522-amino-acid polypeptide reads, in one-letter code: N-acetylgalactosamine-6-sulfatase (522 aa).

Positions 1–25 are cleaved as a signal peptide; that stretch reads MAPVAAATGWRLLLVLSAAGLGAAG. A catalytic domain region spans residues 27 to 379; that stretch reads PQPPNILLLL…PAMLGGQLTD (353 aa). D38, D39, and C78 together coordinate Ca(2+). The active-site Nucleophile is C78. A 3-oxoalanine (Cys) modification is found at C78. H141 is a catalytic residue. N203 carries N-linked (GlcNAc...) asparagine glycosylation. Residues D288 and N289 each contribute to the Ca(2+) site. A disulfide bond links C308 and C419. Residue N423 is glycosylated (N-linked (GlcNAc...) asparagine). 2 disulfides stabilise this stretch: C489-C518 and C501-C507.

The protein belongs to the sulfatase family. In terms of assembly, homodimer. Ca(2+) is required as a cofactor. In terms of processing, the conversion to 3-oxoalanine (also known as C-formylglycine, FGly), of a serine or cysteine residue in prokaryotes and of a cysteine residue in eukaryotes, is critical for catalytic activity.

The protein resides in the lysosome. The enzyme catalyses Hydrolysis of the 6-sulfate groups of the N-acetyl-D-galactosamine 6-sulfate units of chondroitin sulfate and of the D-galactose 6-sulfate units of keratan sulfate.. This is N-acetylgalactosamine-6-sulfatase (GALNS) from Canis lupus familiaris (Dog).